Here is a 304-residue protein sequence, read N- to C-terminus: D-alanine--D-alanine ligase (304 aa).

Residues 103–301 enclose the ATP-grasp domain; that stretch reads KQVWLALGLP…FDDLVWRILE (199 aa). Residue 132 to 187 participates in ATP binding; it reads VEMLGFPVIIKPAKEGSSVGVSRVFALEHLEEAVALAARYEGELLMEQLIEGDELT. Residues D254, E268, and N270 each contribute to the Mg(2+) site.

The protein belongs to the D-alanine--D-alanine ligase family. It depends on Mg(2+) as a cofactor. The cofactor is Mn(2+).

The protein localises to the cytoplasm. It carries out the reaction 2 D-alanine + ATP = D-alanyl-D-alanine + ADP + phosphate + H(+). It functions in the pathway cell wall biogenesis; peptidoglycan biosynthesis. Its function is as follows. Cell wall formation. The polypeptide is D-alanine--D-alanine ligase (Xylella fastidiosa (strain Temecula1 / ATCC 700964)).